We begin with the raw amino-acid sequence, 610 residues long: Propanediol dehydratase-reactivating factor large subunit (610 aa).

11 to 13 (NSS) serves as a coordination point for ATP. Mg(2+) is bound by residues Thr-105, Asp-166, and Asp-183. ATP is bound by residues 459-462 (EEIK), 557-558 (GS), and Arg-591.

Belongs to the DdrA/PduG family. In terms of assembly, forms a heterotetramer PduG(2)/PduH(2). Mg(2+) serves as cofactor.

It is found in the bacterial microcompartment. The catalysed reaction is ATP + H2O = ADP + phosphate + H(+). It functions in the pathway polyol metabolism; 1,2-propanediol degradation. In terms of biological role, large subunit of the propanediol dehydratase-reactivating factor (DDR), which reactivates suicidally inhibited adenosylcobalamin-dependent propanediol dehydratase (diol dehydratase, DDH) found in the bacterial microcompartment (BMC) dedicated to 1,2-propanediol (1,2-PD) degradation. Reactivates inactivated DDH in the presence of ATP, Mg(2+) and free adenosylcobalamin (AdoCbl), by mediating the exchange of the tightly bound damaged cofactor AdoCbl for a free intact one. This subunit contains the adenosine nucleotide binding site. Expression of a cosmid containing the full 21-gene pdu operon in E.coli allows E.coli to grow on 1,2-propanediol (1,2-PD) with the appearance of bacterial microcompartments (BMC) in its cytoplasm. Functionally, the 1,2-PD-specific bacterial microcompartment (BMC) concentrates low levels of 1,2-PD catabolic enzymes, concentrates volatile reaction intermediates thus enhancing pathway flux and keeps the level of toxic, mutagenic propionaldehyde low. This Citrobacter freundii protein is Propanediol dehydratase-reactivating factor large subunit.